The primary structure comprises 237 residues: Phosphoribosylaminoimidazole-succinocarboxamide synthase (237 aa).

This sequence belongs to the SAICAR synthetase family.

The catalysed reaction is 5-amino-1-(5-phospho-D-ribosyl)imidazole-4-carboxylate + L-aspartate + ATP = (2S)-2-[5-amino-1-(5-phospho-beta-D-ribosyl)imidazole-4-carboxamido]succinate + ADP + phosphate + 2 H(+). Its pathway is purine metabolism; IMP biosynthesis via de novo pathway; 5-amino-1-(5-phospho-D-ribosyl)imidazole-4-carboxamide from 5-amino-1-(5-phospho-D-ribosyl)imidazole-4-carboxylate: step 1/2. This chain is Phosphoribosylaminoimidazole-succinocarboxamide synthase, found in Hamiltonella defensa subsp. Acyrthosiphon pisum (strain 5AT).